A 206-amino-acid chain; its full sequence is MARYLGPKLKLSRREGTDLFLKSGVRAIDTKCKIDNAPGVHGARRGRLSEYGVQLREKQKVRRIYGVLEKQFRNYYKEAARLKGNTGANLLQLLEGRLDNVVYRMGFGATRAESRQLVSHKSILVNGKVVNVPSFKVAANDVVSIREKAKQQSRIKAALEVAEQREKPTWIEVDAGKMEGTFKRMPERSDLSADINEHLIVELYSK.

In terms of domain architecture, S4 RNA-binding spans 96–158 (GRLDNVVYRM…AKQQSRIKAA (63 aa)).

The protein belongs to the universal ribosomal protein uS4 family. As to quaternary structure, part of the 30S ribosomal subunit. Contacts protein S5. The interaction surface between S4 and S5 is involved in control of translational fidelity.

In terms of biological role, one of the primary rRNA binding proteins, it binds directly to 16S rRNA where it nucleates assembly of the body of the 30S subunit. Functionally, with S5 and S12 plays an important role in translational accuracy. The chain is Small ribosomal subunit protein uS4 from Vibrio atlanticus (strain LGP32) (Vibrio splendidus (strain Mel32)).